The following is a 289-amino-acid chain: Rhodopsin (289 aa).

Residues 1-7 (YLVNPAG) lie on the Extracellular side of the membrane. The helical transmembrane segment at 8–32 (YAALGAYMFLLILIGSPVNFLTLYV) threads the bilayer. The Cytoplasmic segment spans residues 33-44 (TLEHKKLRTPLN). The helical transmembrane segment at 45–67 (YILLNLAVADLFMVLGGFTTTMY) threads the bilayer. Residues 68-81 (TSMHGYSVLGRLGC) are Extracellular-facing. Cysteines 81 and 158 form a disulfide. Residues 82–104 (ILEGFFATLGGEIALWSLVVLAI) form a helical membrane-spanning segment. The short motif at 105-107 (ERW) is the 'Ionic lock' involved in activated form stabilization element. Residues 105 to 123 (ERWIVVCKPISNFRFTEDH) are Cytoplasmic-facing. A helical transmembrane segment spans residues 124–144 (AIMGLAFSWVMALACAVPPLV). Topologically, residues 145–173 (GWSRYIPEGMQCSCGVDYYTRAEGFNNES) are extracellular. An N-linked (GlcNAc...) asparagine glycan is attached at asparagine 171. The helical transmembrane segment at 174–195 (FVIYMFIVHFLIPLSVIFFCYG) threads the bilayer. The Cytoplasmic segment spans residues 196 to 223 (RLLCAVKEAAAAQQESETTQRPEKEVTR). The chain crosses the membrane as a helical span at residues 224–245 (MVVIMVIAFLVCCLPNASVAWW). The Extracellular segment spans residues 246 to 257 (IFCNQGSDFGPI). The chain crosses the membrane as a helical span at residues 258–279 (FMTLPSFFAKSAAIYNPMIYIC). Lysine 267 is modified (N6-(retinylidene)lysine). At 280 to 289 (MNKQFRHCMI) the chain is on the cytoplasmic side.

This sequence belongs to the G-protein coupled receptor 1 family. Opsin subfamily. In terms of processing, phosphorylated on some or all of the serine and threonine residues present in the C-terminal region. Contains one covalently linked retinal chromophore.

It is found in the membrane. It localises to the cell projection. Its subcellular location is the cilium. The protein resides in the photoreceptor outer segment. Photoreceptor required for image-forming vision at low light intensity. While most salt water fish species use retinal as chromophore, most freshwater fish use 3-dehydroretinal, or a mixture of retinal and 3-dehydroretinal. Light-induced isomerization of 11-cis to all-trans retinal triggers a conformational change that activates signaling via G-proteins. Subsequent receptor phosphorylation mediates displacement of the bound G-protein alpha subunit by arrestin and terminates signaling. In Limnocottus bergianus, this protein is Rhodopsin (rho).